Here is a 280-residue protein sequence, read N- to C-terminus: Protein scylla (280 aa).

The disordered stretch occupies residues 39–96 (LMSKKAKTTTGGSSNGSNATATSTTTSTSSSIKHKQPAGSSNNNVGQSQSKKTKPSGS). Composition is skewed to low complexity over residues 46-69 (TTTG…TSSS) and 77-96 (GSSN…PSGS).

Belongs to the DDIT4 family.

The protein localises to the cytoplasm. In terms of biological role, inhibits cell growth by regulating the Tor pathway upstream of the Tsc1-Tsc2 complex and downstream of Akt1. Acts as a cell death activator during head development. The sequence is that of Protein scylla (scyl) from Drosophila melanogaster (Fruit fly).